We begin with the raw amino-acid sequence, 853 residues long: DNA mismatch repair protein MutS (853 aa).

Residue 614-621 (GPNMGGKS) participates in ATP binding.

Belongs to the DNA mismatch repair MutS family.

This protein is involved in the repair of mismatches in DNA. It is possible that it carries out the mismatch recognition step. This protein has a weak ATPase activity. This is DNA mismatch repair protein MutS from Cronobacter sakazakii (strain ATCC BAA-894) (Enterobacter sakazakii).